Here is a 156-residue protein sequence, read N- to C-terminus: Small ribosomal subunit protein uS7 (156 aa).

It belongs to the universal ribosomal protein uS7 family. As to quaternary structure, part of the 30S ribosomal subunit. Contacts proteins S9 and S11.

Functionally, one of the primary rRNA binding proteins, it binds directly to 16S rRNA where it nucleates assembly of the head domain of the 30S subunit. Is located at the subunit interface close to the decoding center, probably blocks exit of the E-site tRNA. This chain is Small ribosomal subunit protein uS7, found in Lactobacillus acidophilus (strain ATCC 700396 / NCK56 / N2 / NCFM).